The primary structure comprises 469 residues: ATP synthase subunit beta (469 aa).

155–162 lines the ATP pocket; the sequence is GGAGVGKT.

This sequence belongs to the ATPase alpha/beta chains family. As to quaternary structure, F-type ATPases have 2 components, CF(1) - the catalytic core - and CF(0) - the membrane proton channel. CF(1) has five subunits: alpha(3), beta(3), gamma(1), delta(1), epsilon(1). CF(0) has three main subunits: a(1), b(2) and c(9-12). The alpha and beta chains form an alternating ring which encloses part of the gamma chain. CF(1) is attached to CF(0) by a central stalk formed by the gamma and epsilon chains, while a peripheral stalk is formed by the delta and b chains.

It localises to the cell inner membrane. The catalysed reaction is ATP + H2O + 4 H(+)(in) = ADP + phosphate + 5 H(+)(out). In terms of biological role, produces ATP from ADP in the presence of a proton gradient across the membrane. The catalytic sites are hosted primarily by the beta subunits. The sequence is that of ATP synthase subunit beta from Syntrophobacter fumaroxidans (strain DSM 10017 / MPOB).